Reading from the N-terminus, the 1476-residue chain is MEPSMDVNSVTISVEGMTCISCVRTIEQKIGKENGIHHIKVSLEEKSATIIYDPKLQTPKTLQEAIDDMGFDALLHNANPLPVLTDTLFLTVTASLTLPWDHIQSTLLKTKGVTDIKIFPQKRTLAVTIIPSIVNANQIKELVPELSLETGTLEKRSGACEDHSMAQAGEVVLKIKVEGMTCHSCTSTTEGKIGKLQGVQRIKVSLDNQEATIVYQPHLISVEEIKKQIEAMGFPAFVKKQPKYLKLGAIDVERLKNTPVKSLEGSQQRPSYPSDSTATFIIEGMHCKSCVSNIESALPTLQYVSSIAVSLENRSAIVKYNASSVTPEMLIKAIEAVSPGQYRVSIANEVESTSSSPSSSSLQKMPLNVVSQPLTQETVINISGMTCNSCVQSIEGVVSKKPGVKSIHVSLANSFGTVEYDPLLTAPETLREVIVDMGFDAVLPDMSEPLVVIAQPSLETPLLPSTNDQDNMMTAVHSKCYIQVSGMTCASCVANIERNLRREEGIYSVLVALMAGKAEVRYNPAVIQPPVIAEFIRELGFGATVMENADEGDGILKLVVRGMTCASCVHKIESTLTKHKGIFYCSVALATNKAHIKYDPEIIGPRDIIHTIGSLGFEASLVKKDRSASHLDHKREIKQWRSSFLVSLFFCTPVMGLMMYMMAMEHHFATIHHNQSMSNEEMIKNHSSMFLERQILPGLSIMNLLSLLLCLPVQFFGGWYFYIQAYKALKHKTANMDVLIVLATTIAFAYSLIILLVAMYERAKVNPITSFDTPPMLFVFIALGRWLEHIAKGKTSEALAKLISLQATEATIVTLDSDNILLSEEQVDVELVQRGDIIKVVPGGKFPVDGRVIEGHSMVDESLITGEAMPVAKKPGSTVIAGSINQNGSLLICATHVGADTTLSQIVKLVEEAQTSKAPIQQFADKLGGYFVPFIVLVSIATLLVWIIIGFQNFTIVETYFPGYSRSISRTETIIRFAFQASITVLCIACPCSLGLATPTAVMVGTGVGAQNGILIKGGEPLEMAHKVKVVVFDKTGTITHGTPVVNQVKVLVESNKIPRSKILAIVGTAESNSEHPLGAAVTKYCKQELDTETLGTCTDFQVVPGCGISCKVTNIEGLLHKSNLKIEENNTKNASLVQIDAINEQSSTSSSMIIDAPLSNAVDTQQYKVLIGNREWMIRNGLVISNDVDDSMIDHGRKGRPAVLVTIDDELCGLIAIADTVKPEAELAVHILKSMGLEVVLMTGDNSKTARSIASQVGITKVFAEVLPSHKVAKVKQLQEEGKRVAMVGDGINDSPALAMANVGIAIGTGTDVTIEAADVVFIRNDLLDVVASIDLSRKTVKRIRINFLFPLIYNLVGIPIAAGVFLPIGLVFQPWMGSAAMAASSVSVVLSSLFLKLYRKPTYDNYELRTRSHTGQRSPSEISVHVGIDDASRNSPRLGLLDRIVNYSRASINSLLSDKRSLNSVVNSEPDKHS.

Residues 1–642 are Cytoplasmic-facing; the sequence is MEPSMDVNSV…HKREIKQWRS (642 aa). HMA domains follow at residues 8 to 74 and 85 to 151; these read NSVT…FDAL and TDTL…LETG. Positions 18, 19, and 22 each coordinate Cu(+). Thr152 carries the post-translational modification Phosphothreonine. HMA domains follow at residues 171-237 and 276-342; these read VVLK…FPAF and STAT…PGQY. Cys182, Cys185, Cys287, and Cys290 together coordinate Cu(+). Thr326 carries the phosphothreonine modification. 4 positions are modified to phosphoserine: Ser338, Ser352, Ser356, and Ser361. HMA domains lie at 376–442, 478–544, and 554–620; these read QETV…FDAV, SKCY…FGAT, and GILK…FEAS. Positions 387, 390, 489, 492, 565, and 568 each coordinate Cu(+). A helical transmembrane segment spans residues 643-665; that stretch reads SFLVSLFFCTPVMGLMMYMMAME. 2 N-linked (GlcNAc...) asparagine glycosylation sites follow: Asn674 and Asn685. 3 helical membrane passes run 695–717, 736–760, and 770–788; these read ILPGLSIMNLLSLLLCLPVQFFG, MDVLIVLATTIAFAYSLIILLVAMY, and SFDTPPMLFVFIALGRWLE. Asn887 carries N-linked (GlcNAc...) asparagine glycosylation. Residues 930–952 form a helical membrane-spanning segment; the sequence is YFVPFIVLVSIATLLVWIIIGFQ. N-linked (GlcNAc...) asparagine glycosylation occurs at Asn953. The helical transmembrane segment at 978 to 998 threads the bilayer; sequence AFQASITVLCIACPCSLGLAT. Catalysis depends on Asp1034, which acts as the 4-aspartylphosphate intermediate. 2 N-linked (GlcNAc...) asparagine glycosylation sites follow: Asn1130 and Asn1134. Transmembrane regions (helical) follow at residues 1347-1373 and 1379-1397; these read INFLFPLIYNLVGIPIAAGVFLPIGLV and GSAAMAASSVSVVLSSLFL. 2 positions are modified to phosphoserine: Ser1420 and Ser1422. Asn1448 carries an N-linked (GlcNAc...) asparagine glycan. Phosphoserine occurs at positions 1450, 1453, 1456, 1459, 1463, 1466, and 1476.

The protein belongs to the cation transport ATPase (P-type) (TC 3.A.3) family. Monomer. Interacts with PDZD11. Interacts with ATOX1 and COMMD1. Interacts with TYRP1. Directly interacts with SOD3; this interaction is copper-dependent and is required for SOD3 activity. As to expression, expressed in most tissues except liver.

It is found in the golgi apparatus. The protein localises to the trans-Golgi network membrane. The protein resides in the cell membrane. The enzyme catalyses Cu(+)(in) + ATP + H2O = Cu(+)(out) + ADP + phosphate + H(+). May function in the export of copper from the cytoplasm to an intracellular organelle. It may serve as well for the export of other metals. The sequence is that of Copper-transporting ATPase 1 (ATP7A) from Cricetulus griseus (Chinese hamster).